Here is a 2108-residue protein sequence, read N- to C-terminus: General negative regulator of transcription subunit 1 (2108 aa).

Coiled coils occupy residues 795 to 813 (NVTL…KSLT) and 1021 to 1046 (MQQH…QQQQ). A disordered region spans residues 1323–1352 (QQQQLQKSRLNQPSQSAQPPGVNVPNPQGG). The span at 1329 to 1339 (KSRLNQPSQSA) shows a compositional bias: polar residues. The span at 1340–1352 (QPPGVNVPNPQGG) shows a compositional bias: low complexity. Thr2102 is modified (phosphothreonine).

The protein belongs to the CNOT1 family. Forms a NOT protein complex that comprises NOT1, NOT2, NOT3, NOT4 and NOT5. Subunit of the 1.0 MDa CCR4-NOT core complex that contains CCR4, CAF1, NOT1, NOT2, NOT3, NOT4, NOT5, CAF40 and CAF130. In the complex interacts with CCR4, POP2, NOT2, NOT4 and NOT5. The core complex probably is part of a less characterized 1.9 MDa CCR4-NOT complex.

It localises to the cytoplasm. The protein localises to the nucleus. Functionally, acts as a component of the CCR4-NOT core complex, which in the nucleus seems to be a general transcription factor, and in the cytoplasm the major mRNA deadenylase involved in mRNA turnover. The NOT protein subcomplex negatively regulates the basal and activated transcription of many genes. Preferentially affects TC-type TATA element-dependent transcription. Could directly or indirectly inhibit component(s) of the general transcription machinery. This Saccharomyces cerevisiae (strain ATCC 204508 / S288c) (Baker's yeast) protein is General negative regulator of transcription subunit 1 (CDC39).